The primary structure comprises 591 residues: Uncoordinated protein 58 (591 aa).

The segment at 1 to 24 is disordered; sequence MFFYSPNVAPQPSSTSHRRPTLTH. Residues 184-204 traverse the membrane as a helical segment; the sequence is VILVSVLIGYLCLGAWILMLL. The N-linked (GlcNAc...) asparagine glycan is linked to Asn226. Transmembrane regions (helical) follow at residues 289-309, 318-338, 400-420, 428-448, and 453-473; these read TFPTAILYVLTVLTTCGYGEV, VFSVAFALVGIPLMFITAADI, PIGAYVSCICIYCSIGSAMFI, FIHAFHFGFNLIVTVGLGDIV, and IFLSLIVAFVIVGLSVVTMCV.

It belongs to the two pore domain potassium channel (TC 1.A.1.8) family.

Its subcellular location is the membrane. In terms of biological role, has a role in mobility, possibly in the transport of potassium in muscles. The protein is Uncoordinated protein 58 of Caenorhabditis elegans.